Reading from the N-terminus, the 477-residue chain is S-triazine hydrolase (477 aa).

Low complexity-rich tracts occupy residues 38–73 and 120–132; these read SPTT…KSSS and PLSS…DPTT. 2 disordered regions span residues 38-77 and 120-143; these read SPTT…GVVH and PLSS…GSPF.

The protein belongs to the metallo-dependent hydrolases superfamily. ATZ/TRZ family.

The protein operates within xenobiotic degradation; melamine degradation. Functionally, hydrolytic deamination of the S-triazine substrate melamine. The polypeptide is S-triazine hydrolase (trzA) (Gordonia rubripertincta (Rhodococcus corallinus)).